Reading from the N-terminus, the 186-residue chain is Threonylcarbamoyl-AMP synthase (186 aa).

The 185-residue stretch at 2–186 folds into the YrdC-like domain; that stretch reads VSNLQQVVKA…ARTEQLLRQG (185 aa).

The protein belongs to the SUA5 family. TsaC subfamily.

The protein resides in the cytoplasm. It catalyses the reaction L-threonine + hydrogencarbonate + ATP = L-threonylcarbamoyladenylate + diphosphate + H2O. Its function is as follows. Required for the formation of a threonylcarbamoyl group on adenosine at position 37 (t(6)A37) in tRNAs that read codons beginning with adenine. Catalyzes the conversion of L-threonine, HCO(3)(-)/CO(2) and ATP to give threonylcarbamoyl-AMP (TC-AMP) as the acyladenylate intermediate, with the release of diphosphate. The polypeptide is Threonylcarbamoyl-AMP synthase (Vibrio vulnificus (strain CMCP6)).